The following is a 1285-amino-acid chain: Period circadian protein homolog 1 (1285 aa).

The tract at residues 1–134 (MSGPLEGADG…SSEQSARART (134 aa)) is disordered. The tract at residues 1–151 (MSGPLEGADG…LRELKLRLPP (151 aa)) is interaction with BTRC. 2 stretches are compositionally biased toward low complexity: residues 48 to 57 (NSNGSSGNES) and 64 to 115 (GASQ…ASSE). Over residues 116-132 (QDNPSTSGCSSEQSARA) the composition is skewed to polar residues. A Phosphothreonine; by CSNK1E modification is found at Thr121. 2 positions are modified to phosphoserine; by CSNK1E: Ser122 and Ser126. A Nuclear export signal 1 motif is present at residues 138–147 (LMTALRELKL). PAS domains lie at 208 to 275 (ITSE…PFRL) and 348 to 414 (YEAP…KILQ). The 44-residue stretch at 422–465 (HSPIRFCARNGEYVTMDTSWAGFVHPWSRKVAFVLGRHKVRTAP) folds into the PAC domain. The Nuclear export signal 2 signature appears at 489–498 (LSEQIHRLLL). Disordered regions lie at residues 503–544 (SSSP…PAPV) and 643–694 (TKRK…KEPV). 2 stretches are compositionally biased toward low complexity: residues 523-533 (SPGSSSDSNGG) and 648-658 (ASSSSCTASSA). A required for phosphorylation by CSNK1E region spans residues 592-811 (ELEVVPMPNQ…GLDSSSATPS (220 aa)). 4 positions are modified to phosphoserine: Ser657, Ser659, Ser700, and Ser811. Disordered regions lie at residues 802–867 (GLDS…PPST) and 931–1030 (LSQA…DALS). The short motif at 820–836 (VPPGRRHHCRSKAKRSR) is the Nuclear localization signal element. Residues 823–840 (GRRHHCRSKAKRSRHHHT) are compositionally biased toward basic residues. The span at 853–867 (SPVPPSGPWPPPPST) shows a compositional bias: pro residues. Positions 943 to 954 (ASHSPSPSLTPL) are enriched in low complexity. Over residues 967-979 (FNSRCSSPLQLNL) the composition is skewed to polar residues. Residues Ser972 and Ser973 each carry the phosphoserine modification. A Nuclear export signal 3 motif is present at residues 975-982 (LQLNLLQL). Positions 1036-1040 (LELLL) match the LXXLL motif. Residues 1045 to 1055 (RSGTGSAASGS) are compositionally biased toward low complexity. Disordered regions lie at residues 1045–1091 (RSGT…SKYF) and 1202–1285 (IQDP…NSTS). Over residues 1056–1070 (LGSGLGSGSGSGSHE) the composition is skewed to gly residues. The segment covering 1071–1088 (GGSTSASITRSSQSSHTS) has biased composition (low complexity). A CRY binding domain region spans residues 1142–1285 (SRDRASVLKQ…ALPAEENSTS (144 aa)). The span at 1229–1241 (GEGGGGGGGGGEG) shows a compositional bias: gly residues. A compositionally biased stretch (polar residues) spans 1269–1285 (GGSSSSPALPAEENSTS).

In terms of assembly, homodimer. Component of the circadian core oscillator, which includes the CRY proteins, CLOCK or NPAS2, BMAL1 or BMAL2, CSNK1D and/or CSNK1E, TIMELESS, and the PER proteins. Interacts directly with TIMELESS, PER2, PER3, CRY1 and CRY2. Interacts with BMAL1 and CLOCK. Interacts with GPRASP1. Interacts (phosphorylated) with BTRC and FBXW11; the interactions trigger proteasomal degradation. Interacts with NONO, WDR5 and SFPQ. Interacts with USP2. Interacts with HNF4A. Phosphorylated on serine residues by CSNK1D, CSNK1E and probably also by CSNK1G2. Phosphorylation by CSNK1D or CSNK1E promotes nuclear location of PER proteins as well as ubiquitination and subsequent degradation. May be dephosphorylated by PP1. In terms of processing, ubiquitinated; requires phosphorylation by CSNK1E and interaction with BTRC and FBXW11. Deubiquitinated by USP2. Expressed in the brain, mainly in the suprachiasmatic nucleus (SCN). Expression also found in the harderian gland, lung, eye, intestine, liver and skeletal muscle.

The protein localises to the nucleus. Its subcellular location is the cytoplasm. Transcriptional repressor which forms a core component of the circadian clock. The circadian clock, an internal time-keeping system, regulates various physiological processes through the generation of approximately 24 hour circadian rhythms in gene expression, which are translated into rhythms in metabolism and behavior. It is derived from the Latin roots 'circa' (about) and 'diem' (day) and acts as an important regulator of a wide array of physiological functions including metabolism, sleep, body temperature, blood pressure, endocrine, immune, cardiovascular, and renal function. Consists of two major components: the central clock, residing in the suprachiasmatic nucleus (SCN) of the brain, and the peripheral clocks that are present in nearly every tissue and organ system. Both the central and peripheral clocks can be reset by environmental cues, also known as Zeitgebers (German for 'timegivers'). The predominant Zeitgeber for the central clock is light, which is sensed by retina and signals directly to the SCN. The central clock entrains the peripheral clocks through neuronal and hormonal signals, body temperature and feeding-related cues, aligning all clocks with the external light/dark cycle. Circadian rhythms allow an organism to achieve temporal homeostasis with its environment at the molecular level by regulating gene expression to create a peak of protein expression once every 24 hours to control when a particular physiological process is most active with respect to the solar day. Transcription and translation of core clock components (CLOCK, NPAS2, BMAL1, BMAL2, PER1, PER2, PER3, CRY1 and CRY2) plays a critical role in rhythm generation, whereas delays imposed by post-translational modifications (PTMs) are important for determining the period (tau) of the rhythms (tau refers to the period of a rhythm and is the length, in time, of one complete cycle). A diurnal rhythm is synchronized with the day/night cycle, while the ultradian and infradian rhythms have a period shorter and longer than 24 hours, respectively. Disruptions in the circadian rhythms contribute to the pathology of cardiovascular diseases, cancer, metabolic syndromes and aging. A transcription/translation feedback loop (TTFL) forms the core of the molecular circadian clock mechanism. Transcription factors, CLOCK or NPAS2 and BMAL1 or BMAL2, form the positive limb of the feedback loop, act in the form of a heterodimer and activate the transcription of core clock genes and clock-controlled genes (involved in key metabolic processes), harboring E-box elements (5'-CACGTG-3') within their promoters. The core clock genes: PER1/2/3 and CRY1/2 which are transcriptional repressors form the negative limb of the feedback loop and interact with the CLOCK|NPAS2-BMAL1|BMAL2 heterodimer inhibiting its activity and thereby negatively regulating their own expression. This heterodimer also activates nuclear receptors NR1D1/2 and RORA/B/G, which form a second feedback loop and which activate and repress BMAL1 transcription, respectively. Regulates circadian target genes expression at post-transcriptional levels, but may not be required for the repression at transcriptional level. Controls PER2 protein decay. Represses CRY2 preventing its repression on CLOCK/BMAL1 target genes such as FXYD5 and SCNN1A in kidney and PPARA in liver. Besides its involvement in the maintenance of the circadian clock, has an important function in the regulation of several processes. Participates in the repression of glucocorticoid receptor NR3C1/GR-induced transcriptional activity by reducing the association of NR3C1/GR to glucocorticoid response elements (GREs) by BMAL1:CLOCK. Plays a role in the modulation of the neuroinflammatory state via the regulation of inflammatory mediators release, such as CCL2 and IL6. In spinal astrocytes, negatively regulates the MAPK14/p38 and MAPK8/JNK MAPK cascades as well as the subsequent activation of NFkappaB. Coordinately regulates the expression of multiple genes that are involved in the regulation of renal sodium reabsorption. Can act as gene expression activator in a gene and tissue specific manner, in kidney enhances WNK1 and SLC12A3 expression in collaboration with CLOCK. Modulates hair follicle cycling. Represses the CLOCK-BMAL1 induced transcription of BHLHE40/DEC1. The sequence is that of Period circadian protein homolog 1 (PER1) from Spalax judaei (Judean Mountains blind mole rat).